The chain runs to 340 residues: Biotin synthase (340 aa).

The region spanning Ser53–Arg280 is the Radical SAM core domain. Positions 68, 72, and 75 each coordinate [4Fe-4S] cluster. [2Fe-2S] cluster is bound by residues Cys112, Cys143, Cys203, and Arg275.

Belongs to the radical SAM superfamily. Biotin synthase family. In terms of assembly, homodimer. Requires [4Fe-4S] cluster as cofactor. The cofactor is [2Fe-2S] cluster.

The catalysed reaction is (4R,5S)-dethiobiotin + (sulfur carrier)-SH + 2 reduced [2Fe-2S]-[ferredoxin] + 2 S-adenosyl-L-methionine = (sulfur carrier)-H + biotin + 2 5'-deoxyadenosine + 2 L-methionine + 2 oxidized [2Fe-2S]-[ferredoxin]. It participates in cofactor biosynthesis; biotin biosynthesis; biotin from 7,8-diaminononanoate: step 2/2. Functionally, catalyzes the conversion of dethiobiotin (DTB) to biotin by the insertion of a sulfur atom into dethiobiotin via a radical-based mechanism. In Bordetella petrii (strain ATCC BAA-461 / DSM 12804 / CCUG 43448), this protein is Biotin synthase.